A 1385-amino-acid polypeptide reads, in one-letter code: Contactin-associated protein 1 (1385 aa).

The N-terminal stretch at 1–20 (MMSLRLFSILLATVVSGAWG) is a signal peptide. Over 21 to 1284 (WGYYGCNEEL…PYYHDDGWIA (1264 aa)) the chain is Extracellular. The F5/8 type C domain maps to 26–169 (CNEELVGPLY…IGLRLGIYGC (144 aa)). A disulfide bridge links Cys-26 with Cys-169. Residues Asn-121, Asn-129, and Asn-277 are each glycosylated (N-linked (GlcNAc...) asparagine). Laminin G-like domains follow at residues 204–356 (FKTE…AFRC) and 390–539 (FRTW…FDTC). Cys-324 and Cys-356 are disulfide-bonded. N-linked (GlcNAc...) asparagine glycans are attached at residues Asn-421, Asn-500, and Asn-519. Intrachain disulfides connect Cys-507–Cys-539, Cys-545–Cys-556, Cys-550–Cys-565, and Cys-567–Cys-577. The region spanning 545–577 (CSPNMCEHDGRCYQSWDDFICYCELTGYKGVTC) is the EGF-like 1 domain. Residues 577-796 (CHEPLYKESC…NTISFHTGAA (220 aa)) enclose the Fibrinogen C-terminal domain. Asn-598, Asn-654, Asn-665, Asn-764, Asn-805, Asn-844, Asn-861, Asn-949, and Asn-957 each carry an N-linked (GlcNAc...) asparagine glycan. The 145-residue stretch at 814–958 (FRTSAPSGVF…NASEGTFPNC (145 aa)) folds into the Laminin G-like 3 domain. 4 disulfide bridges follow: Cys-931–Cys-958, Cys-962–Cys-975, Cys-969–Cys-984, and Cys-986–Cys-996. Residues 962–996 (CTHPRFPCFHGGRCVERYSYYTCDCDLTAFDGPYC) enclose the EGF-like 2 domain. 2 N-linked (GlcNAc...) asparagine glycosylation sites follow: Asn-1079 and Asn-1148. In terms of domain architecture, Laminin G-like 4 spans 1089 to 1251 (FSTNSAPAVL…VQGELSESNC (163 aa)). The cysteines at positions 1210 and 1251 are disulfide-linked. The chain crosses the membrane as a helical span at residues 1285–1305 (ILLGFLVAFLLLGLVGMLVLF). At 1306–1385 (YLQNHRYKGS…PQILEESRSE (80 aa)) the chain is on the cytoplasmic side. Positions 1317–1385 (HTNEPKATHD…PQILEESRSE (69 aa)) are disordered. A compositionally biased stretch (basic and acidic residues) spans 1319–1329 (NEPKATHDSHP). The span at 1334–1367 (PLPPSGPAQAPAPTPAPTQLPTPAPAPAPAPASG) shows a compositional bias: pro residues. Residues 1334-1370 (PLPPSGPAQAPAPTPAPTQLPTPAPAPAPAPASGPGP) carry the SH3-binding motif. The residue at position 1384 (Ser-1384) is a Phosphoserine.

Belongs to the neurexin family. As to quaternary structure, interacts with CNTN1/contactin in cis form. In terms of tissue distribution, expressed in brain. In myelinated nerve fibers predominantly found in paranodal axoglial junctions. In the internodal region of myelinated axons in the CNS and the PNS also found as a thin line apposing the inner mesaxon of the myelin sheath. In PNS neurons this line forms a circumferential ring that apposes the innermost aspect of Schmidt-Lanterman incisures.

Its subcellular location is the membrane. It localises to the cell junction. The protein resides in the paranodal septate junction. In terms of biological role, required, with CNTNAP2, for radial and longitudinal organization of myelinated axons. Plays a role in the formation of functional distinct domains critical for saltatory conduction of nerve impulses in myelinated nerve fibers. Demarcates the paranodal region of the axo-glial junction. In association with contactin involved in the signaling between axons and myelinating glial cells. The chain is Contactin-associated protein 1 (Cntnap1) from Mus musculus (Mouse).